Reading from the N-terminus, the 386-residue chain is Demethylsterigmatocystin 6-O-methyltransferase (386 aa).

A substrate-binding site is contributed by 137–150; that stretch reads FDISGPCTQILPDF. The interval 177–197 is substrate binding; the sequence is MFEWMPQHPKHMESLGHLMAL. Residues 228-229, Asp253, 273-274, and Arg289 each bind S-adenosyl-L-methionine; these read GG and NF. The Proton acceptor role is filled by His293.

Belongs to the class I-like SAM-binding methyltransferase superfamily. Cation-independent O-methyltransferase family. COMT subfamily.

It carries out the reaction 6-demethylsterigmatocystin + S-adenosyl-L-methionine = sterigmatocystin + S-adenosyl-L-homocysteine + H(+). It functions in the pathway mycotoxin biosynthesis; aflatoxin biosynthesis. Catalyzes both the conversion of demethylsterigmatocystin (DMST) to sterigmatocystin and the conversion of dihydrodemethylsterigmatocystin to dihydrosterigmatocystin (DHDMST) during aflatoxin biosynthesis. The sequence is that of Demethylsterigmatocystin 6-O-methyltransferase (omtB) from Aspergillus flavus (strain ATCC 200026 / FGSC A1120 / IAM 13836 / NRRL 3357 / JCM 12722 / SRRC 167).